We begin with the raw amino-acid sequence, 273 residues long: 2,3,4,5-tetrahydropyridine-2,6-dicarboxylate N-succinyltransferase (273 aa).

Substrate is bound by residues Arg-104 and Asp-141.

It belongs to the transferase hexapeptide repeat family. In terms of assembly, homotrimer.

The protein localises to the cytoplasm. The catalysed reaction is (S)-2,3,4,5-tetrahydrodipicolinate + succinyl-CoA + H2O = (S)-2-succinylamino-6-oxoheptanedioate + CoA. It functions in the pathway amino-acid biosynthesis; L-lysine biosynthesis via DAP pathway; LL-2,6-diaminopimelate from (S)-tetrahydrodipicolinate (succinylase route): step 1/3. The chain is 2,3,4,5-tetrahydropyridine-2,6-dicarboxylate N-succinyltransferase from Neisseria meningitidis serogroup B (strain ATCC BAA-335 / MC58).